Reading from the N-terminus, the 61-residue chain is Small ribosomal subunit protein uS14 (61 aa).

Positions 24, 27, 40, and 43 each coordinate Zn(2+).

This sequence belongs to the universal ribosomal protein uS14 family. Zinc-binding uS14 subfamily. As to quaternary structure, part of the 30S ribosomal subunit. Contacts proteins S3 and S10. Zn(2+) serves as cofactor.

Functionally, binds 16S rRNA, required for the assembly of 30S particles and may also be responsible for determining the conformation of the 16S rRNA at the A site. This chain is Small ribosomal subunit protein uS14, found in Kosmotoga olearia (strain ATCC BAA-1733 / DSM 21960 / TBF 19.5.1).